The sequence spans 180 residues: Crossover junction endodeoxyribonuclease RuvC (180 aa).

Active-site residues include Asp13, Glu73, and Asp145. 3 residues coordinate Mg(2+): Asp13, Glu73, and Asp145.

This sequence belongs to the RuvC family. As to quaternary structure, homodimer which binds Holliday junction (HJ) DNA. The HJ becomes 2-fold symmetrical on binding to RuvC with unstacked arms; it has a different conformation from HJ DNA in complex with RuvA. In the full resolvosome a probable DNA-RuvA(4)-RuvB(12)-RuvC(2) complex forms which resolves the HJ. Requires Mg(2+) as cofactor.

It localises to the cytoplasm. The enzyme catalyses Endonucleolytic cleavage at a junction such as a reciprocal single-stranded crossover between two homologous DNA duplexes (Holliday junction).. Functionally, the RuvA-RuvB-RuvC complex processes Holliday junction (HJ) DNA during genetic recombination and DNA repair. Endonuclease that resolves HJ intermediates. Cleaves cruciform DNA by making single-stranded nicks across the HJ at symmetrical positions within the homologous arms, yielding a 5'-phosphate and a 3'-hydroxyl group; requires a central core of homology in the junction. The consensus cleavage sequence is 5'-(A/T)TT(C/G)-3'. Cleavage occurs on the 3'-side of the TT dinucleotide at the point of strand exchange. HJ branch migration catalyzed by RuvA-RuvB allows RuvC to scan DNA until it finds its consensus sequence, where it cleaves and resolves the cruciform DNA. The sequence is that of Crossover junction endodeoxyribonuclease RuvC from Magnetococcus marinus (strain ATCC BAA-1437 / JCM 17883 / MC-1).